The chain runs to 52 residues: Venom peptide 4b (52 aa).

An N-terminal signal peptide occupies residues 1–23; the sequence is MRSAILLVIVAIVAILGFLGVNA. AXPX repeat units lie at residues 23 to 26, 31 to 34, and 39 to 42; these read AEPL, AEPN, and AAPL. Residues 24-41 constitute a propeptide that is removed on maturation; that stretch reads EPLPSPLAEPNPHAKAAP. The segment at 30 to 52 is disordered; the sequence is LAEPNPHAKAAPLSPAAMASLAG. The segment covering 37–52 has biased composition (low complexity); that stretch reads AKAAPLSPAAMASLAG. The residue at position 51 (Ala-51) is an Alanine amide.

As to expression, expressed by the venom gland.

The protein resides in the secreted. This is Venom peptide 4b from Eumenes pomiformis (Potter wasp).